The following is a 1081-amino-acid chain: Serine/threonine-protein kinase PKH2 (1081 aa).

At S138 the chain carries Phosphoserine. In terms of domain architecture, Protein kinase spans 179–443 (FKFGSVIGDG…ISQIKEHHFF (265 aa)). ATP is bound by residues 189–191 (AYS) and K208. Residues 210–255 (LNKEYLIRQKKVKYVSIEKTALQKLNNSPSVVRLFSTFQDESSLYF) are PIF-pocket. Residues 258 to 260 (EYA) and D264 each bind ATP. D303 functions as the Proton acceptor in the catalytic mechanism. Residues E307 and D321 each contribute to the ATP site. Residues 494-526 (HLVTQRSASSPSVEETTHSTLYNNNTHASTESE) show a composition bias toward polar residues. 3 disordered regions span residues 494–652 (HLVT…TYQM), 805–833 (NRSG…NKGS), and 970–1017 (IERR…INSA). A compositionally biased stretch (basic and acidic residues) spans 527–538 (ISIKKRPTDERT). Low complexity-rich tracts occupy residues 564 to 575 (AASAALAASAAL) and 582 to 602 (SYPT…TSRP). S619 bears the Phosphoserine mark. Residues 632–645 (PMPPYTPPMSPPMT) show a composition bias toward pro residues. Polar residues-rich tracts occupy residues 805 to 819 (NRSG…NSSP) and 998 to 1017 (HSQS…INSA). S1009 is modified (phosphoserine).

It belongs to the protein kinase superfamily. AGC Ser/Thr protein kinase family. PDPK1 subfamily.

It is found in the nucleus. Its subcellular location is the cytoplasm. The protein resides in the cell cortex. The catalysed reaction is L-seryl-[protein] + ATP = O-phospho-L-seryl-[protein] + ADP + H(+). It carries out the reaction L-threonyl-[protein] + ATP = O-phospho-L-threonyl-[protein] + ADP + H(+). Its activity is regulated as follows. Sphingoid base activates kinase activity. Serine/threonine-protein kinase which is part sphingolipid-mediated signaling pathway that is required for the internalization step of endocytosis by regulating eisosome assembly and organization, and modulating the organization of the plasma membrane. Phosphorylates and activates PKC1. Activates YPK1 and YPK2, 2 components of signaling cascade required for maintenance of cell wall integrity. Required for stress-induced P-body assembly and regulates global mRNA decay at the deadenylation step. This is Serine/threonine-protein kinase PKH2 (PKH2) from Saccharomyces cerevisiae (strain ATCC 204508 / S288c) (Baker's yeast).